Reading from the N-terminus, the 696-residue chain is Elongation factor G (696 aa).

Residues 8–290 (ERYRNIGVMA…AVLDYLPSPA (283 aa)) form the tr-type G domain. GTP contacts are provided by residues 17–24 (AHIDAGKT), 88–92 (DTPGH), and 142–145 (NKMD).

It belongs to the TRAFAC class translation factor GTPase superfamily. Classic translation factor GTPase family. EF-G/EF-2 subfamily.

It localises to the cytoplasm. In terms of biological role, catalyzes the GTP-dependent ribosomal translocation step during translation elongation. During this step, the ribosome changes from the pre-translocational (PRE) to the post-translocational (POST) state as the newly formed A-site-bound peptidyl-tRNA and P-site-bound deacylated tRNA move to the P and E sites, respectively. Catalyzes the coordinated movement of the two tRNA molecules, the mRNA and conformational changes in the ribosome. The chain is Elongation factor G from Nitrosospira multiformis (strain ATCC 25196 / NCIMB 11849 / C 71).